We begin with the raw amino-acid sequence, 274 residues long: uncharacterized protein (274 aa).

Its subcellular location is the plastid. It localises to the chloroplast. This is an uncharacterized protein from Euglena gracilis.